Reading from the N-terminus, the 567-residue chain is Urease subunit alpha (567 aa).

A Urease domain is found at 128 to 567 (GGVDTHVHYI…LPLAQRYHLF (440 aa)). Positions 133, 135, and 216 each coordinate Ni(2+). Lys-216 bears the N6-carboxylysine mark. Position 218 (His-218) interacts with substrate. Ni(2+) contacts are provided by His-245 and His-271. His-319 acts as the Proton donor in catalysis. Ni(2+) is bound at residue Asp-359.

Belongs to the metallo-dependent hydrolases superfamily. Urease alpha subunit family. As to quaternary structure, heterotrimer of UreA (gamma), UreB (beta) and UreC (alpha) subunits. Three heterotrimers associate to form the active enzyme. It depends on Ni cation as a cofactor. In terms of processing, carboxylation allows a single lysine to coordinate two nickel ions.

The protein localises to the cytoplasm. It catalyses the reaction urea + 2 H2O + H(+) = hydrogencarbonate + 2 NH4(+). It functions in the pathway nitrogen metabolism; urea degradation; CO(2) and NH(3) from urea (urease route): step 1/1. The sequence is that of Urease subunit alpha from Pseudoalteromonas translucida (strain TAC 125).